A 256-amino-acid polypeptide reads, in one-letter code: Spheroidene monooxygenase (256 aa).

Positions 1-23 (MTNELSNAAGASQQGPAASSFSA) are enriched in low complexity. Positions 1–26 (MTNELSNAAGASQQGPAASSFSADTP) are disordered.

This sequence belongs to the CrtA family. Heme is required as a cofactor.

It catalyses the reaction spheroidene + 4 reduced [2Fe-2S]-[ferredoxin] + 2 O2 + 4 H(+) = spheroiden-2-one + 4 oxidized [2Fe-2S]-[ferredoxin] + 3 H2O. It carries out the reaction spirilloxanthin + 4 reduced [2Fe-2S]-[ferredoxin] + 2 O2 + 4 H(+) = 2-oxospirilloxanthin + 4 oxidized [2Fe-2S]-[ferredoxin] + 3 H2O. The enzyme catalyses 2-oxospirilloxanthin + 4 reduced [2Fe-2S]-[ferredoxin] + 2 O2 + 4 H(+) = 2,2'-dioxospirilloxanthin + 4 oxidized [2Fe-2S]-[ferredoxin] + 3 H2O. The catalysed reaction is spheroidene + 2 reduced [2Fe-2S]-[ferredoxin] + O2 + 2 H(+) = 2-hydroxyspheroidene + 2 oxidized [2Fe-2S]-[ferredoxin] + H2O. It catalyses the reaction 2-hydroxyspheroidene + 2 reduced [2Fe-2S]-[ferredoxin] + O2 + 2 H(+) = 2,2-dihydroxyspheroidene + 2 oxidized [2Fe-2S]-[ferredoxin] + H2O. It carries out the reaction 2,2-dihydroxyspheroidene = spheroiden-2-one + H2O. The enzyme catalyses spirilloxanthin + 2 reduced [2Fe-2S]-[ferredoxin] + O2 + 2 H(+) = 2-hydroxyspirilloxanthin + 2 oxidized [2Fe-2S]-[ferredoxin] + H2O. The catalysed reaction is 2-hydroxyspirilloxanthin + 2 reduced [2Fe-2S]-[ferredoxin] + O2 + 2 H(+) = 2,2-dihydroxyspirilloxanthin + 2 oxidized [2Fe-2S]-[ferredoxin] + H2O. It catalyses the reaction 2,2-dihydroxyspirilloxanthin = 2-oxospirilloxanthin + H2O. It carries out the reaction 2-oxospirilloxanthin + 2 reduced [2Fe-2S]-[ferredoxin] + O2 + 2 H(+) = 2'-hydroxy-2-oxospirilloxanthin + 2 oxidized [2Fe-2S]-[ferredoxin] + H2O. The enzyme catalyses 2'-hydroxy-2-oxospirilloxanthin + 2 reduced [2Fe-2S]-[ferredoxin] + O2 + 2 H(+) = 2',2'-dihydroxy-2-oxospirilloxanthin + 2 oxidized [2Fe-2S]-[ferredoxin] + H2O. The catalysed reaction is 2',2'-dihydroxy-2-oxospirilloxanthin = 2,2'-dioxospirilloxanthin + H2O. Its pathway is carotenoid biosynthesis; spheroidene biosynthesis. It functions in the pathway carotenoid biosynthesis; spirilloxanthin biosynthesis. In terms of biological role, involved in the biosynthesis of the carotenoids spheroidene and spirilloxanthin. Catalyzes the introduction of one keto group at the C-2 position of spheroidene and two keto groups at the C-2 and C-2' positions of spirilloxanthin. The sequence is that of Spheroidene monooxygenase from Rubrivivax gelatinosus (Rhodocyclus gelatinosus).